We begin with the raw amino-acid sequence, 356 residues long: Protein-glutamate methylesterase/protein-glutamine glutaminase (356 aa).

In terms of domain architecture, Response regulatory spans 4-121 (KVLIVDDSAL…QSGMLEYTDL (118 aa)). Position 55 is a 4-aspartylphosphate (aspartate 55). Positions 156–349 (PLTSSEKLII…RRVLEFFAAH (194 aa)) constitute a CheB-type methylesterase domain. Residues serine 169, histidine 195, and aspartate 291 contribute to the active site.

This sequence belongs to the CheB family. Post-translationally, phosphorylated by CheA. Phosphorylation of the N-terminal regulatory domain activates the methylesterase activity.

It localises to the cytoplasm. It carries out the reaction [protein]-L-glutamate 5-O-methyl ester + H2O = L-glutamyl-[protein] + methanol + H(+). It catalyses the reaction L-glutaminyl-[protein] + H2O = L-glutamyl-[protein] + NH4(+). Its function is as follows. Involved in chemotaxis. Part of a chemotaxis signal transduction system that modulates chemotaxis in response to various stimuli. Catalyzes the demethylation of specific methylglutamate residues introduced into the chemoreceptors (methyl-accepting chemotaxis proteins or MCP) by CheR. Also mediates the irreversible deamidation of specific glutamine residues to glutamic acid. The sequence is that of Protein-glutamate methylesterase/protein-glutamine glutaminase from Thiobacillus denitrificans (strain ATCC 25259 / T1).